Consider the following 617-residue polypeptide: Kelch-like protein 9 (617 aa).

The region spanning 50 to 119 is the BTB domain; the sequence is CDVTLVPGDG…IYTAKLSLNM (70 aa). Positions 154–255 constitute a BACK domain; it reads CVEVGRIANT…TPQDLINYVQ (102 aa). 6 Kelch repeats span residues 299–347, 348–399, 400–446, 448–493, 495–545, and 546–594; these read HLVT…VIGN, FLYV…ALKG, HLYA…VYGG, MYIS…TVGD, LYVI…VFEN, and KIYV…TLTV. Residues 595–617 form a disordered region; sequence FPPEENPGSPSRESPLSAPSDHS.

Component of the BCR(KLHL9-KLHL13) E3 ubiquitin ligase complex, at least composed of CUL3, KLHL9, KLHL13 and RBX1. Interacts with AURKB.

It participates in protein modification; protein ubiquitination. In terms of biological role, substrate-specific adapter of a BCR (BTB-CUL3-RBX1) E3 ubiquitin-protein ligase complex required for mitotic progression and cytokinesis. The BCR(KLHL9-KLHL13) E3 ubiquitin ligase complex mediates the ubiquitination of AURKB and controls the dynamic behavior of AURKB on mitotic chromosomes and thereby coordinates faithful mitotic progression and completion of cytokinesis. In Mus musculus (Mouse), this protein is Kelch-like protein 9 (Klhl9).